We begin with the raw amino-acid sequence, 572 residues long: MKTVVLLTWISCWIDVCTSAQGRYAQKLLNDLMENYSSALRPVEDTDKTLNVTLQITLSQIKDMDERNQVLTTYLWIRQTWFDAYLKWDKEEYDGLEVIRIPSNLVWRPDIVLYNKADEEASGPADTNVVLRYNGEITWDMPAITKSSCVVDVSYFPFDWQWCNLTFGSWTYNGNQVDIAMGMDSGDLSDFVENVEWECHGMPAVRNVIMYGCCSDPYPDITYTLHLKRRSLFYIFNLLLPCFLISFLAPLGFYLPADSGEKVSLGVTVLLALTVFQLMVAESMPPSESVPYIGKYYIATMTMITASTSLTIFIMNIHFCGAEAKPVPHWAKVLIIDYMSKILFVYEVGENCTTPESERTPLYSEEPMSGNSALARNHYHDDLYHDGGCYQDDCHRLRPYQYGNGHLQNHHSTHQNHLDNCRYANGGHRDDHYSNRSNQNHHSNRSQTSKGEGGEEKREPLRHYHHIGREELDYQAPPPGNLQNGGLNEPLPYPKEKHLNPASAPACSCPCPHHKQVVYNIQYIANCFREQRATCAKGAEWKKVAKVMDRFFMWIFFIMVFLMSILIIGKAT.

The first 19 residues, 1–19 (MKTVVLLTWISCWIDVCTS), serve as a signal peptide directing secretion. Residues 20–232 (AQGRYAQKLL…YTLHLKRRSL (213 aa)) are Extracellular-facing. A glycan (N-linked (GlcNAc...) asparagine) is linked at Asn51. A disulfide bridge links Cys149 with Cys163. Asn164 carries N-linked (GlcNAc...) asparagine glycosylation. Cys213 and Cys214 are disulfide-bonded. A run of 3 helical transmembrane segments spans residues 233-253 (FYIF…PLGF), 263-283 (VSLG…VAES), and 297-317 (YIAT…IMNI). The Cytoplasmic segment spans residues 318–550 (HFCGAEAKPV…WKKVAKVMDR (233 aa)). A disordered region spans residues 405–458 (GHLQNHHSTHQNHLDNCRYANGGHRDDHYSNRSNQNHHSNRSQTSKGEGGEEKR). The span at 435–447 (NRSNQNHHSNRSQ) shows a compositional bias: low complexity. Residues 551 to 571 (FFMWIFFIMVFLMSILIIGKA) form a helical membrane-spanning segment.

This sequence belongs to the ligand-gated ion channel (TC 1.A.9) family. Acetylcholine receptor (TC 1.A.9.1) subfamily. Expressed in the liver, olfactory mucosa, pituitary gland, hair cells of the saccule and spleen.

The protein resides in the postsynaptic cell membrane. It localises to the cell membrane. The protein is Neuronal acetylcholine receptor subunit alpha-9-I (nachra9) of Oncorhynchus mykiss (Rainbow trout).